A 475-amino-acid polypeptide reads, in one-letter code: Aspartyl/glutamyl-tRNA(Asn/Gln) amidotransferase subunit B (475 aa).

Belongs to the GatB/GatE family. GatB subfamily. In terms of assembly, heterotrimer of A, B and C subunits.

The enzyme catalyses L-glutamyl-tRNA(Gln) + L-glutamine + ATP + H2O = L-glutaminyl-tRNA(Gln) + L-glutamate + ADP + phosphate + H(+). The catalysed reaction is L-aspartyl-tRNA(Asn) + L-glutamine + ATP + H2O = L-asparaginyl-tRNA(Asn) + L-glutamate + ADP + phosphate + 2 H(+). In terms of biological role, allows the formation of correctly charged Asn-tRNA(Asn) or Gln-tRNA(Gln) through the transamidation of misacylated Asp-tRNA(Asn) or Glu-tRNA(Gln) in organisms which lack either or both of asparaginyl-tRNA or glutaminyl-tRNA synthetases. The reaction takes place in the presence of glutamine and ATP through an activated phospho-Asp-tRNA(Asn) or phospho-Glu-tRNA(Gln). The chain is Aspartyl/glutamyl-tRNA(Asn/Gln) amidotransferase subunit B from Thermoanaerobacter sp. (strain X514).